We begin with the raw amino-acid sequence, 225 residues long: 7-cyano-7-deazaguanine synthase (225 aa).

9-19 (YSGGLDSTTCL) serves as a coordination point for ATP. Zn(2+) contacts are provided by C188, C198, C201, and C204.

The protein belongs to the QueC family. Zn(2+) is required as a cofactor.

It carries out the reaction 7-carboxy-7-deazaguanine + NH4(+) + ATP = 7-cyano-7-deazaguanine + ADP + phosphate + H2O + H(+). The protein operates within purine metabolism; 7-cyano-7-deazaguanine biosynthesis. Catalyzes the ATP-dependent conversion of 7-carboxy-7-deazaguanine (CDG) to 7-cyano-7-deazaguanine (preQ(0)). This is 7-cyano-7-deazaguanine synthase from Citrifermentans bemidjiense (strain ATCC BAA-1014 / DSM 16622 / JCM 12645 / Bem) (Geobacter bemidjiensis).